A 453-amino-acid polypeptide reads, in one-letter code: Odorant receptor 83a (453 aa).

Topologically, residues methionine 1–cysteine 28 are cytoplasmic. Residues isoleucine 29–valine 49 form a helical membrane-spanning segment. Topologically, residues arginine 50–aspartate 85 are extracellular. Residues phenylalanine 86–tyrosine 106 traverse the membrane as a helical segment. At phenylalanine 107 to leucine 148 the chain is on the cytoplasmic side. Residues tryptophan 149–isoleucine 169 form a helical membrane-spanning segment. Topologically, residues alanine 170–glutamine 203 are extracellular. Residues isoleucine 204 to isoleucine 224 traverse the membrane as a helical segment. Residues serine 225 to serine 322 are Cytoplasmic-facing. The helical transmembrane segment at proline 323–serine 343 threads the bilayer. Topologically, residues threonine 344–glycine 359 are extracellular. A helical transmembrane segment spans residues glutamine 360 to phenylalanine 380. Over glutamine 381 to phenylalanine 408 the chain is Cytoplasmic. Residues phenylalanine 409–valine 429 form a helical membrane-spanning segment. Residues aspartate 430–glutamate 453 are Extracellular-facing.

It belongs to the insect chemoreceptor superfamily. Heteromeric odorant receptor channel (TC 1.A.69) family. Or2a subfamily. Interacts with Orco. Complexes exist early in the endomembrane system in olfactory sensory neurons (OSNs), coupling these complexes to the conserved ciliary trafficking pathway.

It localises to the cell membrane. Odorant receptor which mediates acceptance or avoidance behavior, depending on its substrates. The odorant receptor repertoire encodes a large collection of odor stimuli that vary widely in identity, intensity, and duration. May form a complex with Orco to form odorant-sensing units, providing sensitive and prolonged odorant signaling and calcium permeability. Involved in the behavioral responses to pentanol, ethyl acetate, and propyl acetate. This Drosophila melanogaster (Fruit fly) protein is Odorant receptor 83a (Or83a).